The following is a 224-amino-acid chain: Octanoyltransferase (224 aa).

A BPL/LPL catalytic domain is found at 33 to 213 (GTTAETMLLL…ALQAEFGREA (181 aa)). A disordered region spans residues 51–71 (GKRTTDDERPTDGTPVVDVDR). Substrate contacts are provided by residues 71–78 (RGGKITWH), 143–145 (AIG), and 156–158 (GFA). Residue Cys-174 is the Acyl-thioester intermediate of the active site.

It belongs to the LipB family.

It localises to the cytoplasm. The enzyme catalyses octanoyl-[ACP] + L-lysyl-[protein] = N(6)-octanoyl-L-lysyl-[protein] + holo-[ACP] + H(+). It participates in protein modification; protein lipoylation via endogenous pathway; protein N(6)-(lipoyl)lysine from octanoyl-[acyl-carrier-protein]: step 1/2. Catalyzes the transfer of endogenously produced octanoic acid from octanoyl-acyl-carrier-protein onto the lipoyl domains of lipoate-dependent enzymes. Lipoyl-ACP can also act as a substrate although octanoyl-ACP is likely to be the physiological substrate. The polypeptide is Octanoyltransferase (Leifsonia xyli subsp. xyli (strain CTCB07)).